We begin with the raw amino-acid sequence, 155 residues long: 6,7-dimethyl-8-ribityllumazine synthase (155 aa).

Residues F23, 57–59 (AFE), and 81–83 (AVI) contribute to the 5-amino-6-(D-ribitylamino)uracil site. (2S)-2-hydroxy-3-oxobutyl phosphate is bound at residue 86 to 87 (ST). The Proton donor role is filled by H89. F114 serves as a coordination point for 5-amino-6-(D-ribitylamino)uracil. R128 lines the (2S)-2-hydroxy-3-oxobutyl phosphate pocket.

It belongs to the DMRL synthase family.

The catalysed reaction is (2S)-2-hydroxy-3-oxobutyl phosphate + 5-amino-6-(D-ribitylamino)uracil = 6,7-dimethyl-8-(1-D-ribityl)lumazine + phosphate + 2 H2O + H(+). The protein operates within cofactor biosynthesis; riboflavin biosynthesis; riboflavin from 2-hydroxy-3-oxobutyl phosphate and 5-amino-6-(D-ribitylamino)uracil: step 1/2. Catalyzes the formation of 6,7-dimethyl-8-ribityllumazine by condensation of 5-amino-6-(D-ribitylamino)uracil with 3,4-dihydroxy-2-butanone 4-phosphate. This is the penultimate step in the biosynthesis of riboflavin. This Geobacter sp. (strain M21) protein is 6,7-dimethyl-8-ribityllumazine synthase.